The following is a 556-amino-acid chain: 2-succinyl-5-enolpyruvyl-6-hydroxy-3-cyclohexene-1-carboxylate synthase (556 aa).

The protein belongs to the TPP enzyme family. MenD subfamily. In terms of assembly, homodimer. Requires Mg(2+) as cofactor. It depends on Mn(2+) as a cofactor. Thiamine diphosphate serves as cofactor.

It carries out the reaction isochorismate + 2-oxoglutarate + H(+) = 5-enolpyruvoyl-6-hydroxy-2-succinyl-cyclohex-3-ene-1-carboxylate + CO2. It functions in the pathway quinol/quinone metabolism; 1,4-dihydroxy-2-naphthoate biosynthesis; 1,4-dihydroxy-2-naphthoate from chorismate: step 2/7. The protein operates within quinol/quinone metabolism; menaquinone biosynthesis. Its function is as follows. Catalyzes the thiamine diphosphate-dependent decarboxylation of 2-oxoglutarate and the subsequent addition of the resulting succinic semialdehyde-thiamine pyrophosphate anion to isochorismate to yield 2-succinyl-5-enolpyruvyl-6-hydroxy-3-cyclohexene-1-carboxylate (SEPHCHC). This Escherichia coli O8 (strain IAI1) protein is 2-succinyl-5-enolpyruvyl-6-hydroxy-3-cyclohexene-1-carboxylate synthase.